A 326-amino-acid chain; its full sequence is Glycerol-3-phosphate dehydrogenase [NAD(P)+] (326 aa).

Trp15, Arg35, and Lys107 together coordinate NADPH. The sn-glycerol 3-phosphate site is built by Lys107, Gly135, and Ser137. NADPH is bound at residue Ala139. Sn-glycerol 3-phosphate is bound by residues Lys190, Asp243, Ser253, Arg254, and Asn255. Lys190 (proton acceptor) is an active-site residue. Position 254 (Arg254) interacts with NADPH. 2 residues coordinate NADPH: Leu273 and Glu275.

Belongs to the NAD-dependent glycerol-3-phosphate dehydrogenase family.

The protein resides in the cytoplasm. The catalysed reaction is sn-glycerol 3-phosphate + NAD(+) = dihydroxyacetone phosphate + NADH + H(+). It carries out the reaction sn-glycerol 3-phosphate + NADP(+) = dihydroxyacetone phosphate + NADPH + H(+). Its pathway is membrane lipid metabolism; glycerophospholipid metabolism. In terms of biological role, catalyzes the reduction of the glycolytic intermediate dihydroxyacetone phosphate (DHAP) to sn-glycerol 3-phosphate (G3P), the key precursor for phospholipid synthesis. The protein is Glycerol-3-phosphate dehydrogenase [NAD(P)+] of Bradyrhizobium sp. (strain BTAi1 / ATCC BAA-1182).